A 311-amino-acid chain; its full sequence is MSKILVFGHQNPDTDAIASSYAFDYLSQKAFGLDTEVVALGTPNEETAFALDYFGVEAPRVVESAKAQGSEQVILTDHNEFQQSIADIREVEVYGVVDHHRVANFETANPLYMRVEPVGSASSIVYRMFKENGIEVPKAIAGMLLSGLISDTLLLKSPTTHVSDHLVAEELAELAEVNLEDYGMALLKAGTNLASKSEVELIGIDAKTFELNGNAVRVAQVNTVDISEVLERQEAIEAAIKDAMAAEGYSDFVLMITDIVNSNSEILAIGANMDKVEAAFNFTLDNNHAFLAGAVSRKKQVVPQLTESFGA.

Mn(2+)-binding residues include histidine 9, aspartate 13, aspartate 15, aspartate 77, histidine 99, and aspartate 151.

This sequence belongs to the PPase class C family. Mn(2+) serves as cofactor.

The protein resides in the cytoplasm. The enzyme catalyses diphosphate + H2O = 2 phosphate + H(+). This chain is Probable manganese-dependent inorganic pyrophosphatase, found in Streptococcus pyogenes serotype M49 (strain NZ131).